A 469-amino-acid chain; its full sequence is tRNA-2-methylthio-N(6)-dimethylallyladenosine synthase (469 aa).

Residues Arg-22–Glu-142 form the MTTase N-terminal domain. [4Fe-4S] cluster is bound by residues Cys-31, Cys-67, Cys-105, Cys-183, Cys-187, and Cys-190. The 233-residue stretch at Arg-169–Glu-401 folds into the Radical SAM core domain. One can recognise a TRAM domain in the interval Glu-404 to Glu-466.

The protein belongs to the methylthiotransferase family. MiaB subfamily. Monomer. [4Fe-4S] cluster serves as cofactor.

The protein resides in the cytoplasm. It catalyses the reaction N(6)-dimethylallyladenosine(37) in tRNA + (sulfur carrier)-SH + AH2 + 2 S-adenosyl-L-methionine = 2-methylsulfanyl-N(6)-dimethylallyladenosine(37) in tRNA + (sulfur carrier)-H + 5'-deoxyadenosine + L-methionine + A + S-adenosyl-L-homocysteine + 2 H(+). Its function is as follows. Catalyzes the methylthiolation of N6-(dimethylallyl)adenosine (i(6)A), leading to the formation of 2-methylthio-N6-(dimethylallyl)adenosine (ms(2)i(6)A) at position 37 in tRNAs that read codons beginning with uridine. The protein is tRNA-2-methylthio-N(6)-dimethylallyladenosine synthase of Rhizobium etli (strain ATCC 51251 / DSM 11541 / JCM 21823 / NBRC 15573 / CFN 42).